The primary structure comprises 362 residues: Ferredoxin--NADP reductase, leaf isozyme 1, chloroplastic (362 aa).

The transit peptide at 1 to 36 directs the protein to the chloroplast; it reads MAAVTAAAVSTSAAAAVTKASPSPAHCFLPCPPRTR. The FAD-binding FR-type domain maps to 83 to 205; that stretch reads KEPYVGKCLL…TGPVGKEMLM (123 aa). FAD contacts are provided by residues 141–144, 162–164, Tyr168, 179–181, and Thr220; these read RLYS, CVK, and VCS. Positions 144 and 164 each coordinate NADP(+). Cys180 and Cys185 form a disulfide bridge. Ser181 bears the Phosphoserine mark. NADP(+)-binding positions include Thr220, 252–253, 282–283, Lys292, 321–322, and Glu360; these read VP, SR, and GL.

It belongs to the ferredoxin--NADP reductase type 1 family. As to quaternary structure, heterodimer with LFNR2. Component of high molecular weight thylakoid LFNRs-containing protein complexes containing LIR1, LFNR1, LFNR2, TIC62 and TROL proteins. Interacts directly with LFNR1 and LFNR2; LIR1 increases the affinity of LFNR1 and LFNR2 for TIC62 and subsequent thylakoid relocalization. FAD serves as cofactor. In terms of processing, may form interchain disulfide bonds with LIR1.

It is found in the plastid. The protein resides in the chloroplast stroma. It localises to the chloroplast thylakoid membrane. The catalysed reaction is 2 reduced [2Fe-2S]-[ferredoxin] + NADP(+) + H(+) = 2 oxidized [2Fe-2S]-[ferredoxin] + NADPH. It participates in energy metabolism; photosynthesis. Plays a key role in regulating the relative amounts of cyclic and non-cyclic electron flow to meet the demands of the plant for ATP and reducing power. The chain is Ferredoxin--NADP reductase, leaf isozyme 1, chloroplastic from Oryza sativa subsp. indica (Rice).